Consider the following 301-residue polypeptide: Phosphoribosylaminoimidazole-succinocarboxamide synthase (301 aa).

The protein belongs to the SAICAR synthetase family.

The enzyme catalyses 5-amino-1-(5-phospho-D-ribosyl)imidazole-4-carboxylate + L-aspartate + ATP = (2S)-2-[5-amino-1-(5-phospho-beta-D-ribosyl)imidazole-4-carboxamido]succinate + ADP + phosphate + 2 H(+). Its pathway is purine metabolism; IMP biosynthesis via de novo pathway; 5-amino-1-(5-phospho-D-ribosyl)imidazole-4-carboxamide from 5-amino-1-(5-phospho-D-ribosyl)imidazole-4-carboxylate: step 1/2. In Mycolicibacterium vanbaalenii (strain DSM 7251 / JCM 13017 / BCRC 16820 / KCTC 9966 / NRRL B-24157 / PYR-1) (Mycobacterium vanbaalenii), this protein is Phosphoribosylaminoimidazole-succinocarboxamide synthase.